A 349-amino-acid polypeptide reads, in one-letter code: Magnesium-protoporphyrin IX monomethyl ester [oxidative] cyclase (349 aa).

The segment covering M1 to T10 has biased composition (low complexity). The interval M1 to L23 is disordered.

The protein belongs to the AcsF family. Fe cation is required as a cofactor.

The enzyme catalyses Mg-protoporphyrin IX 13-monomethyl ester + 3 NADPH + 3 O2 + 2 H(+) = 3,8-divinyl protochlorophyllide a + 3 NADP(+) + 5 H2O. It participates in porphyrin-containing compound metabolism; chlorophyll biosynthesis (light-independent). Functionally, catalyzes the formation of the isocyclic ring in chlorophyll biosynthesis. Mediates the cyclase reaction, which results in the formation of divinylprotochlorophyllide (Pchlide) characteristic of all chlorophylls from magnesium-protoporphyrin IX 13-monomethyl ester (MgPMME). In Prochlorococcus marinus (strain MIT 9313), this protein is Magnesium-protoporphyrin IX monomethyl ester [oxidative] cyclase.